Reading from the N-terminus, the 603-residue chain is Geraniol synthase, chloroplastic (603 aa).

A chloroplast-targeting transit peptide spans 1–35 (MSSISQKVVIGLNKAAANNNLQNLDRRGFKTRCVS). (2E)-geranyl diphosphate-binding residues include arginine 319, aspartate 356, aspartate 360, arginine 497, and aspartate 500. Mg(2+)-binding residues include aspartate 356 and aspartate 360. Positions 356–360 (DDVYD) match the DDXXD motif motif. Positions 500, 504, and 508 each coordinate Mg(2+).

The protein belongs to the terpene synthase family. Tpsb subfamily. As to quaternary structure, monomer. Requires Mg(2+) as cofactor. Mn(2+) is required as a cofactor.

The protein localises to the plastid. It is found in the chloroplast. The enzyme catalyses (2E)-geranyl diphosphate + H2O = (2E)-geraniol + diphosphate. Its pathway is secondary metabolite biosynthesis; terpenoid biosynthesis. In terms of biological role, monoterpene synthase (mono-TPS) involved in the biosynthesis of monoterpenes natural products. Catalyzes the conversion of (2E)-geranyl diphosphate (GPP) into geraniol. In Perilla frutescens var. hirtella (Perilla citriodora), this protein is Geraniol synthase, chloroplastic.